Reading from the N-terminus, the 323-residue chain is HPr kinase/phosphorylase (323 aa).

Catalysis depends on residues His146 and Lys167. 161–168 (GESGLGKS) contacts ATP. Mg(2+) is bound at residue Ser168. Asp185 functions as the Proton acceptor; for phosphorylation activity. Proton donor; for dephosphorylation activity in the catalytic mechanism. Positions 209-218 (LEVRGLGLLD) are important for the catalytic mechanism of both phosphorylation and dephosphorylation. Residue Glu210 participates in Mg(2+) binding. The active site involves Arg250. Positions 271–276 (QVAAGR) are important for the catalytic mechanism of dephosphorylation.

It belongs to the HPrK/P family. Homohexamer. Mg(2+) is required as a cofactor.

The enzyme catalyses [HPr protein]-L-serine + ATP = [HPr protein]-O-phospho-L-serine + ADP + H(+). The catalysed reaction is [HPr protein]-O-phospho-L-serine + phosphate + H(+) = [HPr protein]-L-serine + diphosphate. In terms of biological role, catalyzes the ATP- as well as the pyrophosphate-dependent phosphorylation of a specific serine residue in HPr, a phosphocarrier protein of the phosphoenolpyruvate-dependent sugar phosphotransferase system (PTS). HprK/P also catalyzes the pyrophosphate-producing, inorganic phosphate-dependent dephosphorylation (phosphorolysis) of seryl-phosphorylated HPr (P-Ser-HPr). This is HPr kinase/phosphorylase from Cupriavidus pinatubonensis (strain JMP 134 / LMG 1197) (Cupriavidus necator (strain JMP 134)).